A 366-amino-acid polypeptide reads, in one-letter code: Histidinol-phosphate aminotransferase (366 aa).

K228 carries the post-translational modification N6-(pyridoxal phosphate)lysine.

This sequence belongs to the class-II pyridoxal-phosphate-dependent aminotransferase family. Histidinol-phosphate aminotransferase subfamily. In terms of assembly, homodimer. It depends on pyridoxal 5'-phosphate as a cofactor.

It carries out the reaction L-histidinol phosphate + 2-oxoglutarate = 3-(imidazol-4-yl)-2-oxopropyl phosphate + L-glutamate. Its pathway is amino-acid biosynthesis; L-histidine biosynthesis; L-histidine from 5-phospho-alpha-D-ribose 1-diphosphate: step 7/9. The protein is Histidinol-phosphate aminotransferase of Corynebacterium glutamicum (strain ATCC 13032 / DSM 20300 / JCM 1318 / BCRC 11384 / CCUG 27702 / LMG 3730 / NBRC 12168 / NCIMB 10025 / NRRL B-2784 / 534).